Here is a 421-residue protein sequence, read N- to C-terminus: ATP-dependent RNA helicase RhlB (421 aa).

The Q motif signature appears at 9-37 (QKFSDFSLHPKVVEALEKKGFHNCTPIQA). Positions 40-219 (LPLTLAGRDV…FEQMNNAEYI (180 aa)) constitute a Helicase ATP-binding domain. ATP is bound at residue 53-60 (AQTGTGKT). The short motif at 165-168 (DEAD) is the DEAD box element. The 146-residue stretch at 245 to 390 (RLLQTLIEEE…VSKYNPDALM (146 aa)) folds into the Helicase C-terminal domain. The interval 392–421 (DLPKPLRLTRPRTGNGPRRTGAPRNRRRSG) is disordered. A compositionally biased stretch (low complexity) spans 402 to 414 (PRTGNGPRRTGAP).

This sequence belongs to the DEAD box helicase family. RhlB subfamily. In terms of assembly, component of the RNA degradosome, which is a multiprotein complex involved in RNA processing and mRNA degradation.

The protein resides in the cytoplasm. The catalysed reaction is ATP + H2O = ADP + phosphate + H(+). Functionally, DEAD-box RNA helicase involved in RNA degradation. Has RNA-dependent ATPase activity and unwinds double-stranded RNA. The protein is ATP-dependent RNA helicase RhlB of Shigella dysenteriae serotype 1 (strain Sd197).